The primary structure comprises 463 residues: UDP-N-acetylmuramate--L-alanine ligase (463 aa).

112 to 118 provides a ligand contact to ATP; the sequence is GTHGKTT.

Belongs to the MurCDEF family.

It is found in the cytoplasm. It catalyses the reaction UDP-N-acetyl-alpha-D-muramate + L-alanine + ATP = UDP-N-acetyl-alpha-D-muramoyl-L-alanine + ADP + phosphate + H(+). It functions in the pathway cell wall biogenesis; peptidoglycan biosynthesis. Cell wall formation. In Dechloromonas aromatica (strain RCB), this protein is UDP-N-acetylmuramate--L-alanine ligase.